A 118-amino-acid polypeptide reads, in one-letter code: MARVKRGVVARARHKKILKQAKGYYGARSRVYRVAFQAVIKAGQYAYRDRRQRKRQFRQLWIARINAAARTNGISYSRFINGLKKASIEIDRKILADIAVFDKAVFAALVEKAKTALA.

The protein belongs to the bacterial ribosomal protein bL20 family.

Binds directly to 23S ribosomal RNA and is necessary for the in vitro assembly process of the 50S ribosomal subunit. It is not involved in the protein synthesizing functions of that subunit. This is Large ribosomal subunit protein bL20 from Erwinia tasmaniensis (strain DSM 17950 / CFBP 7177 / CIP 109463 / NCPPB 4357 / Et1/99).